Consider the following 406-residue polypeptide: Renin (406 aa).

The first 23 residues, 1–23 (MDGWRRMPRWGLLLLLWGSCTFG), serve as a signal peptide directing secretion. Residues 24-66 (LPTDTTTFKRIFLKRMPSIRESLKERGVDMARLGPEWSQPMKR) constitute a propeptide, activation peptide. Asparagine 71 is a glycosylation site (N-linked (GlcNAc...) asparagine). In terms of domain architecture, Peptidase A1 spans 86–403 (YYGEIGIGTP…DRRNNRIGFA (318 aa)). Aspartate 104 is an active-site residue. The cysteines at positions 117 and 124 are disulfide-linked. N-linked (GlcNAc...) asparagine glycosylation occurs at asparagine 141. A disulfide bond links cysteine 283 and cysteine 287. The active site involves aspartate 292. A disulfide bridge links cysteine 325 with cysteine 362.

It belongs to the peptidase A1 family. As to quaternary structure, interacts with ATP6AP2.

It localises to the secreted. The protein localises to the membrane. The enzyme catalyses Cleavage of Leu-|-Xaa bond in angiotensinogen to generate angiotensin I.. With respect to regulation, interaction with ATP6AP2 results in a 5-fold increased efficiency in angiotensinogen processing. Functionally, renin is a highly specific endopeptidase, whose only known function is to generate angiotensin I from angiotensinogen in the plasma, initiating a cascade of reactions that produce an elevation of blood pressure and increased sodium retention by the kidney. The polypeptide is Renin (REN) (Macaca fascicularis (Crab-eating macaque)).